A 371-amino-acid polypeptide reads, in one-letter code: tRNA 2-selenouridine synthase (371 aa).

The Rhodanese domain maps to 14–137 (FLDDVPLIDL…MRRFLIDTLD (124 aa)). C97 (S-selanylcysteine intermediate) is an active-site residue.

It belongs to the SelU family. In terms of assembly, monomer.

The enzyme catalyses 5-methylaminomethyl-2-thiouridine(34) in tRNA + selenophosphate + (2E)-geranyl diphosphate + H2O + H(+) = 5-methylaminomethyl-2-selenouridine(34) in tRNA + (2E)-thiogeraniol + phosphate + diphosphate. It carries out the reaction 5-methylaminomethyl-2-thiouridine(34) in tRNA + (2E)-geranyl diphosphate = 5-methylaminomethyl-S-(2E)-geranyl-thiouridine(34) in tRNA + diphosphate. It catalyses the reaction 5-methylaminomethyl-S-(2E)-geranyl-thiouridine(34) in tRNA + selenophosphate + H(+) = 5-methylaminomethyl-2-(Se-phospho)selenouridine(34) in tRNA + (2E)-thiogeraniol. The catalysed reaction is 5-methylaminomethyl-2-(Se-phospho)selenouridine(34) in tRNA + H2O = 5-methylaminomethyl-2-selenouridine(34) in tRNA + phosphate. Involved in the post-transcriptional modification of the uridine at the wobble position (U34) of tRNA(Lys), tRNA(Glu) and tRNA(Gln). Catalyzes the conversion of 2-thiouridine (S2U-RNA) to 2-selenouridine (Se2U-RNA). Acts in a two-step process involving geranylation of 2-thiouridine (S2U) to S-geranyl-2-thiouridine (geS2U) and subsequent selenation of the latter derivative to 2-selenouridine (Se2U) in the tRNA chain. This is tRNA 2-selenouridine synthase from Aeromonas salmonicida (strain A449).